Reading from the N-terminus, the 626-residue chain is Chaperone protein HtpG (626 aa).

The interval 1-331 is a; substrate-binding; the sequence is MSETVERHEF…TDDLPLNVSR (331 aa). The tract at residues 332–544 is b; sequence EMLQSTPTLQ…GMGPDLQMQR (213 aa). A c region spans residues 545 to 626; that stretch reads LLRRAGRGFG…GTVAKPAESA (82 aa).

This sequence belongs to the heat shock protein 90 family. Homodimer.

It is found in the cytoplasm. Its function is as follows. Molecular chaperone. Has ATPase activity. The chain is Chaperone protein HtpG from Methylorubrum populi (strain ATCC BAA-705 / NCIMB 13946 / BJ001) (Methylobacterium populi).